Reading from the N-terminus, the 849-residue chain is Disks large homolog 3 (849 aa).

The disordered stretch occupies residues 32–101; that stretch reads DWQVPDPYGP…GKNTPKLNGS (70 aa). A compositionally biased stretch (gly residues) spans 41 to 53; the sequence is PSGGNGASSGYGG. A compositionally biased stretch (polar residues) spans 57–69; the sequence is QTLPSQAGATPTP. 3 PDZ domains span residues 149–235, 244–330, and 404–484; these read EIVL…VRRR, EVNL…VAKP, and KIIL…AQYR. At Ser-157 the chain carries Phosphoserine. Positions 519-589 constitute an SH3 domain; sequence KRSLYVRALF…PSKKRVEKKE (71 aa). The region spanning 659–834 is the Guanylate kinase-like domain; it reads ARPVIILGPM…IYNKIKQIIE (176 aa). Phosphotyrosine is present on Tyr-705.

It belongs to the MAGUK family. In terms of assembly, interacts through its PDZ domains with NETO1 and APC. Interacts through its first two PDZ domains with ERBB4. Interacts through its third PDZ domain with NLGN1, and probably with NLGN2 and NLGN3. Interacts through its PDZ domains with GRIN2B and SYNGAP1. Interacts through its guanylate kinase-like domain with DLGAP1, DLGAP2, DLGAP3 and DLGAP4. Interacts with FRMPD4 (via C-terminus). Interacts with LRFN2. Interacts with LRFN1 and LRFN4. Interacts with FLTP. Interacts with DGKI (via PDZ-binding motif).

In terms of biological role, required for learning most likely through its role in synaptic plasticity following NMDA receptor signaling. This chain is Disks large homolog 3 (Dlg3), found in Rattus norvegicus (Rat).